A 377-amino-acid polypeptide reads, in one-letter code: DNA replication and repair protein RecF (377 aa).

ATP is bound at residue 30–37 (GPNGVGKT).

The protein belongs to the RecF family.

The protein localises to the cytoplasm. Its function is as follows. The RecF protein is involved in DNA metabolism; it is required for DNA replication and normal SOS inducibility. RecF binds preferentially to single-stranded, linear DNA. It also seems to bind ATP. The polypeptide is DNA replication and repair protein RecF (Salinispora tropica (strain ATCC BAA-916 / DSM 44818 / JCM 13857 / NBRC 105044 / CNB-440)).